The primary structure comprises 510 residues: O-acetyltransferase pyr7 (510 aa).

Belongs to the fumigaclavine B O-acetyltransferase family.

Its pathway is secondary metabolite biosynthesis; terpenoid biosynthesis. In terms of biological role, O-acetyltransferase; part of the gene cluster that mediates the biosynthesis of pyripyropene A, a specific human acyl-coenzyme A:cholesterol acyltransferase 2 inhibitor. The first step of the pathway is the synthesis of nicotinyl-CoA from nicotinic acid by the nicotinic acid-CoA ligase pyr1. Nicotinyl-CoA is then a substrate of polyketide synthase pyr2 to produce 4-hydroxy-6-(3-pyridinyl)-2H-pyran-2-one (HPPO) which is further prenylated by the polyprenyl transferase pyr6 to yield farnesyl-HPPO. The next steps consist of an epoxidation of farnesyl-HPPO to epoxyfarnesyl-HPPO by FAD-dependent monooxygenase pyr5 and a cyclization of the terpenoid portion by the terpene cyclase pyr4 to yield deacetyl-pyripyropene E. The 2 cytochrome P450 monooxygenases pyr3 and pyr9, and the 2 acetyltransferases pyr7 and pyr8 are involved in the conversion of deacetyl-pyripyropene E into pyripyropene A through several cycles of oxidation and acetylation steps. Pyr7 acetylates deacetyl-pyripyropene E to pyripyropene E which is oxidized to 11-deacetyl-pyripyropene O by pyr3, which is in turn acetylated into pyripyropene O by pyr8. Pyripyropene O is then oxidized to deacetyl-pyripyropene A by pyr9. Deacetyl-pyripyropene A is finally acetylated to pyripyropene A by pyr8. This Aspergillus fumigatus (strain ATCC MYA-4609 / CBS 101355 / FGSC A1100 / Af293) (Neosartorya fumigata) protein is O-acetyltransferase pyr7.